A 287-amino-acid polypeptide reads, in one-letter code: 4-hydroxybenzoate octaprenyltransferase (287 aa).

6 helical membrane passes run 41-61, 92-112, 133-153, 160-180, 218-238, and 267-287; these read LPLL…GCAI, VALA…LNAL, FFAI…PMAF, VPML…AYDT, LGIY…WLGW, and NNWL…ATWF.

Belongs to the UbiA prenyltransferase family. The cofactor is Mg(2+).

The protein resides in the cell inner membrane. It carries out the reaction all-trans-octaprenyl diphosphate + 4-hydroxybenzoate = 4-hydroxy-3-(all-trans-octaprenyl)benzoate + diphosphate. It functions in the pathway cofactor biosynthesis; ubiquinone biosynthesis. Catalyzes the prenylation of para-hydroxybenzoate (PHB) with an all-trans polyprenyl group. Mediates the second step in the final reaction sequence of ubiquinone-8 (UQ-8) biosynthesis, which is the condensation of the polyisoprenoid side chain with PHB, generating the first membrane-bound Q intermediate 3-octaprenyl-4-hydroxybenzoate. This chain is 4-hydroxybenzoate octaprenyltransferase, found in Paraburkholderia xenovorans (strain LB400).